The chain runs to 318 residues: MQIYLANPRGFCAGVDRAIAIVNEALLRFEPPIYVRHEVVHNKFVVSDLANRGAVFVEELHEVPDGSIVIFSAHGVSKAVEDEAERRDLTVFDATCPLVTKVHIEVAKFAQDGMDAVLIGHAGHPEVEGTMGRFNHRHGGRIHLVENESDVEALSVQDAERLAFVTQTTLSMDDTARVIDALREKFPHIQGPRKDDICYATQNRQDAVKHLASRCEVVLVVGSPNSSNSNRLRELAERMNCRAYLIDNATEMDINWFDGIQSVGVTAGASAPEVLIQEVLQQLQDWGGDLPSELSGIEENVTFSLPKALRIPMTQVGK.

[4Fe-4S] cluster is bound at residue C12. (2E)-4-hydroxy-3-methylbut-2-enyl diphosphate is bound by residues H41 and H74. 2 residues coordinate dimethylallyl diphosphate: H41 and H74. Isopentenyl diphosphate is bound by residues H41 and H74. C96 contributes to the [4Fe-4S] cluster binding site. H124 provides a ligand contact to (2E)-4-hydroxy-3-methylbut-2-enyl diphosphate. A dimethylallyl diphosphate-binding site is contributed by H124. H124 contributes to the isopentenyl diphosphate binding site. Residue E126 is the Proton donor of the active site. T168 contributes to the (2E)-4-hydroxy-3-methylbut-2-enyl diphosphate binding site. Residue C198 participates in [4Fe-4S] cluster binding. The (2E)-4-hydroxy-3-methylbut-2-enyl diphosphate site is built by S226, S227, N228, and S270. S226, S227, N228, and S270 together coordinate dimethylallyl diphosphate. Residues S226, S227, N228, and S270 each coordinate isopentenyl diphosphate.

The protein belongs to the IspH family. Requires [4Fe-4S] cluster as cofactor.

The enzyme catalyses isopentenyl diphosphate + 2 oxidized [2Fe-2S]-[ferredoxin] + H2O = (2E)-4-hydroxy-3-methylbut-2-enyl diphosphate + 2 reduced [2Fe-2S]-[ferredoxin] + 2 H(+). The catalysed reaction is dimethylallyl diphosphate + 2 oxidized [2Fe-2S]-[ferredoxin] + H2O = (2E)-4-hydroxy-3-methylbut-2-enyl diphosphate + 2 reduced [2Fe-2S]-[ferredoxin] + 2 H(+). Its pathway is isoprenoid biosynthesis; dimethylallyl diphosphate biosynthesis; dimethylallyl diphosphate from (2E)-4-hydroxy-3-methylbutenyl diphosphate: step 1/1. It functions in the pathway isoprenoid biosynthesis; isopentenyl diphosphate biosynthesis via DXP pathway; isopentenyl diphosphate from 1-deoxy-D-xylulose 5-phosphate: step 6/6. Catalyzes the conversion of 1-hydroxy-2-methyl-2-(E)-butenyl 4-diphosphate (HMBPP) into a mixture of isopentenyl diphosphate (IPP) and dimethylallyl diphosphate (DMAPP). Acts in the terminal step of the DOXP/MEP pathway for isoprenoid precursor biosynthesis. The sequence is that of 4-hydroxy-3-methylbut-2-enyl diphosphate reductase from Psychrobacter arcticus (strain DSM 17307 / VKM B-2377 / 273-4).